Consider the following 294-residue polypeptide: Protoheme IX farnesyltransferase (294 aa).

A run of 9 helical transmembrane segments spans residues 24–44 (VVLLMLLTVIVGMYLAAPGWV), 48–68 (LIAFTLLGIGLCAGSAAAINH), 96–116 (ALWFAVIIGLMGLSLLILFVN), 118–138 (LTALLTFVTLIGYAGVYTGYL), 145–165 (NIVIGGLAGAAPPLLGWTAVT), 172–192 (ALLLVLIIFTWTPPHFWALAI), 224–244 (VLLLVVSLLPFVVSMSGWIYL), 245–265 (LGALVLGIRFLVWAHKLYFTD), and 268–288 (VVAMQTFRFSILYLMLLFVFL).

This sequence belongs to the UbiA prenyltransferase family. Protoheme IX farnesyltransferase subfamily.

Its subcellular location is the cell inner membrane. The catalysed reaction is heme b + (2E,6E)-farnesyl diphosphate + H2O = Fe(II)-heme o + diphosphate. It functions in the pathway porphyrin-containing compound metabolism; heme O biosynthesis; heme O from protoheme: step 1/1. In terms of biological role, converts heme B (protoheme IX) to heme O by substitution of the vinyl group on carbon 2 of heme B porphyrin ring with a hydroxyethyl farnesyl side group. This chain is Protoheme IX farnesyltransferase, found in Legionella pneumophila (strain Corby).